The sequence spans 450 residues: tRNA modification GTPase MnmE (450 aa).

Residues arginine 23, glutamate 80, and arginine 123 each coordinate (6S)-5-formyl-5,6,7,8-tetrahydrofolate. The TrmE-type G domain occupies 219-372 (GLHVVLAGKP…LRQRLLQLAG (154 aa)). Asparagine 229 lines the K(+) pocket. GTP-binding positions include 229-234 (NVGKSS), 248-254 (TPIAGTT), 273-276 (DTAG), and 353-355 (SAR). Serine 233 contributes to the Mg(2+) binding site. K(+) is bound by residues threonine 248, isoleucine 250, and threonine 253. Threonine 254 contacts Mg(2+). Lysine 450 lines the (6S)-5-formyl-5,6,7,8-tetrahydrofolate pocket.

It belongs to the TRAFAC class TrmE-Era-EngA-EngB-Septin-like GTPase superfamily. TrmE GTPase family. In terms of assembly, homodimer. Heterotetramer of two MnmE and two MnmG subunits. Requires K(+) as cofactor.

The protein resides in the cytoplasm. Exhibits a very high intrinsic GTPase hydrolysis rate. Involved in the addition of a carboxymethylaminomethyl (cmnm) group at the wobble position (U34) of certain tRNAs, forming tRNA-cmnm(5)s(2)U34. In Bordetella parapertussis (strain 12822 / ATCC BAA-587 / NCTC 13253), this protein is tRNA modification GTPase MnmE.